Here is a 428-residue protein sequence, read N- to C-terminus: Serine--tRNA ligase (428 aa).

231-233 serves as a coordination point for L-serine; sequence TAE. 262–264 contacts ATP; that stretch reads RSE. Glu-285 contacts L-serine. Residue 349-352 coordinates ATP; the sequence is EISS. Ser-385 is an L-serine binding site.

Belongs to the class-II aminoacyl-tRNA synthetase family. Type-1 seryl-tRNA synthetase subfamily. As to quaternary structure, homodimer. The tRNA molecule binds across the dimer.

The protein localises to the cytoplasm. The enzyme catalyses tRNA(Ser) + L-serine + ATP = L-seryl-tRNA(Ser) + AMP + diphosphate + H(+). The catalysed reaction is tRNA(Sec) + L-serine + ATP = L-seryl-tRNA(Sec) + AMP + diphosphate + H(+). It functions in the pathway aminoacyl-tRNA biosynthesis; selenocysteinyl-tRNA(Sec) biosynthesis; L-seryl-tRNA(Sec) from L-serine and tRNA(Sec): step 1/1. Functionally, catalyzes the attachment of serine to tRNA(Ser). Is also able to aminoacylate tRNA(Sec) with serine, to form the misacylated tRNA L-seryl-tRNA(Sec), which will be further converted into selenocysteinyl-tRNA(Sec). In Staphylococcus carnosus (strain TM300), this protein is Serine--tRNA ligase.